Consider the following 75-residue polypeptide: Stewaprin-a (75 aa).

The N-terminal stretch at 1-24 is a signal peptide; it reads MSSGGLLLLLGLLTLWAELIPVSG. A WAP domain is found at 27 to 72; that stretch reads HPKKPGLCPPRPQKPPCVRECKNDWSCPGEQKCCRYGCIFECRDPI. 4 disulfides stabilise this stretch: cysteine 34-cysteine 60, cysteine 43-cysteine 64, cysteine 47-cysteine 59, and cysteine 53-cysteine 68.

It belongs to the venom waprin family. In terms of tissue distribution, expressed by the venom gland.

It localises to the secreted. In terms of biological role, damages membranes of susceptible bacteria. Has no hemolytic activity. Not toxic to mice. Does not inhibit the proteinases elastase and cathepsin G. In Hoplocephalus stephensii (Stephens's banded snake), this protein is Stewaprin-a.